The primary structure comprises 407 residues: E3 ubiquitin-protein ligase TRIM13 (407 aa).

The RING-type zinc-finger motif lies at 10–58 (CPICCSLFDDPRVLPCSHNFCKKCLEGLLEGNVRNSLWRPSPFKCPTCR). Residues 89–131 (PKMPVCKGHLGQPLNIFCVTDMQLICGICATRGEHTKHVFSSI) form a B box-type zinc finger. Residues Cys94, His97, Cys117, and His123 each coordinate Zn(2+). Residues 172 to 200 (LQLLTKDSDKVKEFFEKLQHTLDQKKNEI) adopt a coiled-coil conformation. A helical transmembrane segment spans residues 316–336 (LLLMMVVLLGLLIFFGPTVFL).

The protein belongs to the TRIM/RBCC family. As to quaternary structure, interacts (via C-terminal domain) with VCP. Interacts with AKT1; the interaction ubiquitinates AKT1 and leads to its proteasomal degradation. Interacts with MDM2; the interaction ubiquitinates AKT1 and leads to its proteasomal degradation. Interacts with p62/SQSTM1. Interacts with TRAF6. Interacts with IKBKG/NEMO. Auto-ubiquitinated; requires the RING-type zinc finger. Auto-polyubiquitination leads to proteasomal degradation.

The protein resides in the endoplasmic reticulum membrane. The enzyme catalyses S-ubiquitinyl-[E2 ubiquitin-conjugating enzyme]-L-cysteine + [acceptor protein]-L-lysine = [E2 ubiquitin-conjugating enzyme]-L-cysteine + N(6)-ubiquitinyl-[acceptor protein]-L-lysine.. The protein operates within protein modification; protein ubiquitination. Endoplasmic reticulum (ER) membrane anchored E3 ligase involved in the retrotranslocation and turnover of membrane and secretory proteins from the ER through a set of processes named ER-associated degradation (ERAD). This process acts on misfolded proteins as well as in the regulated degradation of correctly folded proteins. Enhances ionizing radiation-induced p53/TP53 stability and apoptosis via ubiquitinating MDM2 and AKT1 and decreasing AKT1 kinase activity through MDM2 and AKT1 proteasomal degradation. Regulates ER stress-induced autophagy, and may act as a tumor suppressor. Also plays a role in innate immune response by stimulating NF-kappa-B activity in the TLR2 signaling pathway. Ubiquitinates TRAF6 via the 'Lys-29'-linked polyubiquitination chain resulting in NF-kappa-B activation. Participates as well in T-cell receptor-mediated NF-kappa-B activation. In the presence of TNF, modulates the IKK complex by regulating IKBKG/NEMO ubiquitination leading to the repression of NF-kappa-B. The protein is E3 ubiquitin-protein ligase TRIM13 (Trim13) of Mus musculus (Mouse).